A 348-amino-acid polypeptide reads, in one-letter code: Nuclear receptor subfamily 1 group I member 3 (348 aa).

A DNA-binding region (nuclear receptor) is located at residues 8–83 (LRNCVVCGDQ…AGMRKDMILS (76 aa)). The NR C4-type zinc finger occupies 11–31 (CVVCGDQATGYHFNALTCEGC). Threonine 38 bears the Phosphothreonine; by PKC mark. An NR C4-type zinc finger spans residues 47–71 (CPFAGSCEVSKTQRRHCPACRLQKC). An NR LBD domain is found at 109–348 (EQEELIRTLL…MMPLLQEICS (240 aa)).

Belongs to the nuclear hormone receptor family. NR1 subfamily. As to quaternary structure, heterodimer of NR1I3 and RXR. Interacts with PSMC4. Interacts with ECT2. Directly interacts with DNAJC7; this complex may also include HSP90. Interacts with CRY1. Interacts with CRY2 in a ligand-dependent manner. Phosphorylated at Thr-38 by PKC, dephosphorylation of Thr-38 is required for nuclear translocation and activation.

It localises to the nucleus. Its subcellular location is the cytoplasm. It is found in the cytoskeleton. Functionally, binds and transactivates the retinoic acid response elements that control expression of the retinoic acid receptor beta 2 and alcohol dehydrogenase 3 genes. Transactivates both the phenobarbital responsive element module of the human CYP2B6 gene and the CYP3A4 xenobiotic response element. This chain is Nuclear receptor subfamily 1 group I member 3 (NR1I3), found in Pan troglodytes (Chimpanzee).